The following is a 667-amino-acid chain: DNA ligase (667 aa).

Residues 32 to 36 (DSEYD), 81 to 82 (SL), and glutamate 110 contribute to the NAD(+) site. Residue lysine 112 is the N6-AMP-lysine intermediate of the active site. Arginine 133, glutamate 167, lysine 283, and lysine 307 together coordinate NAD(+). Zn(2+) contacts are provided by cysteine 401, cysteine 404, cysteine 419, and cysteine 424. Residues 586 to 667 (EGHPDFKDKT…FVQKQNEIEG (82 aa)) enclose the BRCT domain.

This sequence belongs to the NAD-dependent DNA ligase family. LigA subfamily. It depends on Mg(2+) as a cofactor. Mn(2+) serves as cofactor.

It catalyses the reaction NAD(+) + (deoxyribonucleotide)n-3'-hydroxyl + 5'-phospho-(deoxyribonucleotide)m = (deoxyribonucleotide)n+m + AMP + beta-nicotinamide D-nucleotide.. Functionally, DNA ligase that catalyzes the formation of phosphodiester linkages between 5'-phosphoryl and 3'-hydroxyl groups in double-stranded DNA using NAD as a coenzyme and as the energy source for the reaction. It is essential for DNA replication and repair of damaged DNA. This chain is DNA ligase, found in Staphylococcus saprophyticus subsp. saprophyticus (strain ATCC 15305 / DSM 20229 / NCIMB 8711 / NCTC 7292 / S-41).